The primary structure comprises 344 residues: MIGVTRRSGLALAVLVSSAACAGAEPVAPPPAPAPTAPSAVAVERFTPVERRPVADATTTAREVVVAGRTRAYRLHASPGAPALPEGRPLALVLHGKGGSAEEMERHSGLNAAADAAGVALAYLEGVAEGWSASPEPTDLRPDPDADVDFARAVVDELTGAARVDPDHVYAIGFSEGGMMALRLAAEHPDWFAGVASVAGQLPSPPAEVRPTGPIPVLSIYGDADPLRPFDGLSTAPADTPAIGKEPPKPTISTAETVEAFCRAGGADERRREEARPAAAPGGTSTSRETCANPDSGLRVVSITVHGGGHTWPGGTFPYRPAVVGATDRQLSTADTAVDFLLGG.

A signal peptide (tat-type signal) is located at residues 1 to 34 (MIGVTRRSGLALAVLVSSAACAGAEPVAPPPAPA). The disordered stretch occupies residues 265 to 295 (GGADERRREEARPAAAPGGTSTSRETCANPD). The span at 266 to 276 (GADERRREEAR) shows a compositional bias: basic and acidic residues.

It belongs to the AB hydrolase superfamily. In terms of processing, predicted to be exported by the Tat system. The position of the signal peptide cleavage has not been experimentally proven.

The chain is Putative esterase NocK from Nocardia uniformis subsp. tsuyamanensis.